A 259-amino-acid chain; its full sequence is MLLKTVSSSSSSALSLVNFHGVKKDVSPLLPSISSNLRVSSGKSGNLTFSFRASKSSTTDALSGVVFEPFKEVKKELDLVPTSSHLSLARQKYSDECEAAINEQINVEYNVSYVYHAMYAYFDRDNIALKGLAKFFKESSLEEREHAEKLMEYQNKRGGRVKLQSIVMPLSEFEHVDKGDALYGMELALSLEKLVNEKLLNLHSVASKNNDVHLADFIESEFLTEQVEAIKLISEYVAQLRRVGKGHGTWHFNQMLLEG.

Residues 1-57 constitute a chloroplast transit peptide; the sequence is MLLKTVSSSSSSALSLVNFHGVKKDVSPLLPSISSNLRVSSGKSGNLTFSFRASKSS. An extension peptide (EP) region spans residues 58–90; it reads TTDALSGVVFEPFKEVKKELDLVPTSSHLSLAR. The region spanning 91–244 is the Ferritin-like diiron domain; sequence QKYSDECEAA…EYVAQLRRVG (154 aa). 5 residues coordinate Fe cation: Glu108, Glu143, His146, Glu192, and Gln226.

This sequence belongs to the ferritin family. Oligomer of 24 subunits. There are two types of subunits: L (light) chain and H (heavy) chain. The major chain can be light or heavy, depending on the species and tissue type. The functional molecule forms a roughly spherical shell with a diameter of 12 nm and contains a central cavity into which the insoluble mineral iron core is deposited.

The protein localises to the plastid. The protein resides in the chloroplast. It catalyses the reaction 4 Fe(2+) + O2 + 4 H(+) = 4 Fe(3+) + 2 H2O. Its function is as follows. Stores iron in a soluble, non-toxic, readily available form. Important for iron homeostasis. Has ferroxidase activity. Iron is taken up in the ferrous form and deposited as ferric hydroxides after oxidation. The chain is Ferritin-4, chloroplastic (FER4) from Arabidopsis thaliana (Mouse-ear cress).